The chain runs to 378 residues: Succinyl-diaminopimelate desuccinylase 2 (378 aa).

Histidine 68 provides a ligand contact to Zn(2+). The active site involves aspartate 70. Aspartate 101 is a binding site for Zn(2+). Glutamate 135 serves as the catalytic Proton acceptor. Glutamate 136, glutamate 164, and histidine 350 together coordinate Zn(2+).

Belongs to the peptidase M20A family. DapE subfamily. As to quaternary structure, homodimer. Requires Zn(2+) as cofactor. The cofactor is Co(2+).

The enzyme catalyses N-succinyl-(2S,6S)-2,6-diaminopimelate + H2O = (2S,6S)-2,6-diaminopimelate + succinate. It functions in the pathway amino-acid biosynthesis; L-lysine biosynthesis via DAP pathway; LL-2,6-diaminopimelate from (S)-tetrahydrodipicolinate (succinylase route): step 3/3. Its function is as follows. Catalyzes the hydrolysis of N-succinyl-L,L-diaminopimelic acid (SDAP), forming succinate and LL-2,6-diaminopimelate (DAP), an intermediate involved in the bacterial biosynthesis of lysine and meso-diaminopimelic acid, an essential component of bacterial cell walls. The polypeptide is Succinyl-diaminopimelate desuccinylase 2 (Alteromonas mediterranea (strain DSM 17117 / CIP 110805 / LMG 28347 / Deep ecotype)).